A 242-amino-acid chain; its full sequence is 1-(5-phosphoribosyl)-5-[(5-phosphoribosylamino)methylideneamino] imidazole-4-carboxamide isomerase (242 aa).

Residue D8 is the Proton acceptor of the active site. The active-site Proton donor is D129.

This sequence belongs to the HisA/HisF family.

Its subcellular location is the cytoplasm. It carries out the reaction 1-(5-phospho-beta-D-ribosyl)-5-[(5-phospho-beta-D-ribosylamino)methylideneamino]imidazole-4-carboxamide = 5-[(5-phospho-1-deoxy-D-ribulos-1-ylimino)methylamino]-1-(5-phospho-beta-D-ribosyl)imidazole-4-carboxamide. It participates in amino-acid biosynthesis; L-histidine biosynthesis; L-histidine from 5-phospho-alpha-D-ribose 1-diphosphate: step 4/9. In Syntrophus aciditrophicus (strain SB), this protein is 1-(5-phosphoribosyl)-5-[(5-phosphoribosylamino)methylideneamino] imidazole-4-carboxamide isomerase.